Consider the following 703-residue polypeptide: MEETFVPFEGIKNDLKGRLMCYKQDWTGGIKAGFRILAPTTYIFFASAIPVISFGEQLERSTDGVLTAVQTLASTAICGIIHSIIGGQPLLILGVAEPTVIMYTFMFNFAKGRPELGRNLFLAWSGWVCVWTSLILFVLAICGACSFINRFTRVAGELFGLLIAMLFMQQAIKGLVDEFRAPAREDLKLVEFLPSWRFANGMFALVLSFGLLITALRSRKARSWRYGTGWLRSLVADYGVPLMVLVWTGVSYIPTGDVPKGIPRRLFSPNPWSPGAYENWTVVKEMLQVPIVYIIGAFIPATMIAVLYYFDHSVASQLAQQKEFNLRKPSSYHYDLLLLGFLTLMCGLLGIPPSNGVIPQSPMHTKSLATLKYQLLRNRLVATARKSIKQNASLGQLYGNMQDVYNQMQTPLVYQQPQGLKELRESTIQATTFTGNLDAPVDETLFDIEKEIDDLLPIEVKEQRVSNLLQAVMVGGCVAAMPLLKMIPTSVLWGYFAFMAIESLPGNQFWERILLLFTAPSRRFKVLEDNHATFVETVPFKTIAMFTIFQTTYLLTCFGLTWIPIAGVMFPLLIMFLIPVRQYILPRFFKSAHLQDLDAAEYEEAPALPFHLAVPEAEMGSTASYPCDSEILDEFITRSRGEFRHTCSPKVTSSTSTPVYNRNLSQVFSPRVIDLRGEMSPRLSGKGQNSPKPSPLNPSSSSK.

Residues 1–35 (MEETFVPFEGIKNDLKGRLMCYKQDWTGGIKAGFR) lie on the Cytoplasmic side of the membrane. A helical membrane pass occupies residues 36–56 (ILAPTTYIFFASAIPVISFGE). Topologically, residues 57–75 (QLERSTDGVLTAVQTLAST) are extracellular. A helical membrane pass occupies residues 76–96 (AICGIIHSIIGGQPLLILGVA). At 97–120 (EPTVIMYTFMFNFAKGRPELGRNL) the chain is on the cytoplasmic side. Residues 121-141 (FLAWSGWVCVWTSLILFVLAI) traverse the membrane as a helical segment. At 142–155 (CGACSFINRFTRVA) the chain is on the extracellular side. Residues 156–176 (GELFGLLIAMLFMQQAIKGLV) traverse the membrane as a helical segment. The Cytoplasmic portion of the chain corresponds to 177–195 (DEFRAPAREDLKLVEFLPS). Residues 196-216 (WRFANGMFALVLSFGLLITAL) traverse the membrane as a helical segment. Topologically, residues 217-233 (RSRKARSWRYGTGWLRS) are extracellular. The helical transmembrane segment at 234–254 (LVADYGVPLMVLVWTGVSYIP) threads the bilayer. Topologically, residues 255–289 (TGDVPKGIPRRLFSPNPWSPGAYENWTVVKEMLQV) are cytoplasmic. A helical transmembrane segment spans residues 290 to 310 (PIVYIIGAFIPATMIAVLYYF). Topologically, residues 311–337 (DHSVASQLAQQKEFNLRKPSSYHYDLL) are extracellular. Residues 338 to 358 (LLGFLTLMCGLLGIPPSNGVI) traverse the membrane as a helical segment. Residues 359-480 (PQSPMHTKSL…AVMVGGCVAA (122 aa)) lie on the Cytoplasmic side of the membrane. Residues 481–501 (MPLLKMIPTSVLWGYFAFMAI) traverse the membrane as a helical segment. The Extracellular portion of the chain corresponds to 502 to 557 (ESLPGNQFWERILLLFTAPSRRFKVLEDNHATFVETVPFKTIAMFTIFQTTYLLTC). The chain crosses the membrane as a helical span at residues 558 to 578 (FGLTWIPIAGVMFPLLIMFLI). At 579–703 (PVRQYILPRF…SPLNPSSSSK (125 aa)) the chain is on the cytoplasmic side. The segment at 678 to 703 (EMSPRLSGKGQNSPKPSPLNPSSSSK) is disordered.

Belongs to the anion exchanger (TC 2.A.31.3) family.

It localises to the membrane. In terms of biological role, probable boron transporter. Boron is essential for maintaining the integrity of plants cell walls. The polypeptide is Probable boron transporter 2 (BOR2) (Arabidopsis thaliana (Mouse-ear cress)).